An 873-amino-acid polypeptide reads, in one-letter code: Alanine--tRNA ligase (873 aa).

The Zn(2+) site is built by His562, His566, Cys663, and His667.

This sequence belongs to the class-II aminoacyl-tRNA synthetase family. The cofactor is Zn(2+).

Its subcellular location is the cytoplasm. It carries out the reaction tRNA(Ala) + L-alanine + ATP = L-alanyl-tRNA(Ala) + AMP + diphosphate. Its function is as follows. Catalyzes the attachment of alanine to tRNA(Ala) in a two-step reaction: alanine is first activated by ATP to form Ala-AMP and then transferred to the acceptor end of tRNA(Ala). Also edits incorrectly charged Ser-tRNA(Ala) and Gly-tRNA(Ala) via its editing domain. This is Alanine--tRNA ligase from Bordetella avium (strain 197N).